The sequence spans 359 residues: 3-dehydroquinate synthase (359 aa).

NAD(+) is bound by residues 70-75 (DAEGGK), 104-108 (GAATD), 128-129 (TT), Lys141, and Lys150. Residues Glu183, His246, and His262 each coordinate Zn(2+).

This sequence belongs to the sugar phosphate cyclases superfamily. Dehydroquinate synthase family. Co(2+) is required as a cofactor. It depends on Zn(2+) as a cofactor. Requires NAD(+) as cofactor.

The protein localises to the cytoplasm. It carries out the reaction 7-phospho-2-dehydro-3-deoxy-D-arabino-heptonate = 3-dehydroquinate + phosphate. The protein operates within metabolic intermediate biosynthesis; chorismate biosynthesis; chorismate from D-erythrose 4-phosphate and phosphoenolpyruvate: step 2/7. Its function is as follows. Catalyzes the conversion of 3-deoxy-D-arabino-heptulosonate 7-phosphate (DAHP) to dehydroquinate (DHQ). This is 3-dehydroquinate synthase from Mycolicibacterium vanbaalenii (strain DSM 7251 / JCM 13017 / BCRC 16820 / KCTC 9966 / NRRL B-24157 / PYR-1) (Mycobacterium vanbaalenii).